The sequence spans 611 residues: Sodium-coupled monocarboxylate transporter 1 (611 aa).

Over 1-9 the chain is Extracellular; sequence MDASRDIGS. A helical transmembrane segment spans residues 10 to 30; the sequence is FVVWDYVVFAGMLLISAAIGI. Residues 31 to 51 lie on the Cytoplasmic side of the membrane; that stretch reads YYAFAGGGQQTSKDFLMGGRS. The chain crosses the membrane as a helical span at residues 52-72; the sequence is MSAVPVALSLTASFMSAVTVL. Residues 73 to 86 are Extracellular-facing; sequence GTPAEVYRFGAIFS. A helical membrane pass occupies residues 87-107; the sequence is IFVITYFFVVVISAEVFLPVF. The Cytoplasmic portion of the chain corresponds to 108–132; that stretch reads YRLGITSTYEYLELRFNRCIRLCGT. The helical transmembrane segment at 133–153 threads the bilayer; sequence ILFIVQTILYTGIVIYAPALA. Residues 154-161 are Extracellular-facing; sequence LNQVTGFD. Residues 162–182 form a helical membrane-spanning segment; that stretch reads LWGAVVATGVVCTFYCTLGGL. Over 183–184 the chain is Cytoplasmic; the sequence is KA. A helical membrane pass occupies residues 185–205; the sequence is VVWTDVFQVGIMVAGFASVII. At 206 to 239 the chain is on the extracellular side; it reads QASITQHGINKILSDAFNGGRLNFWNFDPNPLQR. Residues 240-260 traverse the membrane as a helical segment; it reads HTFWTIVIGGTFTWTTIYGVN. The Cytoplasmic portion of the chain corresponds to 261-279; it reads QSQVQRYISCKSRLHAKLS. The helical transmembrane segment at 280–300 threads the bilayer; the sequence is LYVNLVGLWVILTCSIFCGLA. Residues 301 to 336 lie on the Extracellular side of the membrane; sequence LYSRYRECDPWTSKKVSAIDQLMPYLVLDILKNYPG. Residues 337 to 359 traverse the membrane as a helical segment; that stretch reads VPGLFVACAYSGTLSTVSSSINA. The Cytoplasmic segment spans residues 360 to 389; sequence LAAVTVEDLIKPRFKSLSEKSLSWISQGMS. The helical transmembrane segment at 390–410 threads the bilayer; that stretch reads VLYGALCIGMAALASLMGALL. At 411 to 415 the chain is on the extracellular side; that stretch reads QAALS. Residues 416 to 436 traverse the membrane as a helical segment; sequence IFGMVGGPLLGLFSLGILVPF. The Cytoplasmic segment spans residues 437–439; it reads ANS. A helical transmembrane segment spans residues 440–460; it reads IGALTGLLAGFAISLWVGIGA. The Extracellular segment spans residues 461-518; sequence QLYPPLPERTLPLPLETYGCNITHNGSDWMSTTEMPFSTSAFQIHNAERTPLMDNWYS. Residue N485 is glycosylated (N-linked (GlcNAc...) asparagine). The chain crosses the membrane as a helical span at residues 519–539; that stretch reads LSYLYFSTIGTLTTLFVGILI. Over 540–611 the chain is Cytoplasmic; sequence SLSTGGRKQN…HSGKINGTRL (72 aa). The PDZ-binding signature appears at 609–611; it reads TRL.

Belongs to the sodium:solute symporter (SSF) (TC 2.A.21) family. As to quaternary structure, interacts (via PDZ-binding motif) with PDZK1 (via PDZ domains 1 and 3); interaction increases nicotinate transport activity of SLC5A8. In terms of tissue distribution, expressed in brain, colon, kidney and in the ileum and jejunum of small intestine. In the kidney, expression occurred in the proximal tubule and the loop of Henle, being restricted to tubular epithelial cells in both the cortex and the medulla. In the colon, predominantly expressed in the distal half of the large bowel and in the most terminal ileum. Localized selectively in the luminal surface of crypts in the large intestine and to the brush border in the middle parts of crypts in the cecum. In the brain, expression was seen throughout, exclusively in neurons, including the cortex, hippocampus, cerebellum and pituitary gland (at protein level). Expression is reduced in oligodendrogliomas.

The protein resides in the apical cell membrane. It catalyses the reaction (S)-lactate(out) + 2 Na(+)(out) = (S)-lactate(in) + 2 Na(+)(in). The catalysed reaction is propanoate(out) + 2 Na(+)(out) = propanoate(in) + 2 Na(+)(in). The enzyme catalyses pyruvate(out) + 2 Na(+)(out) = pyruvate(in) + 2 Na(+)(in). It carries out the reaction acetate(out) + 2 Na(+)(out) = acetate(in) + 2 Na(+)(in). It catalyses the reaction butanoate(out) + 2 Na(+)(out) = butanoate(in) + 2 Na(+)(in). The catalysed reaction is nicotinate(out) + 2 Na(+)(out) = nicotinate(in) + 2 Na(+)(in). The enzyme catalyses (R)-3-hydroxybutanoate(out) + 2 Na(+)(out) = (R)-3-hydroxybutanoate(in) + 2 Na(+)(in). It carries out the reaction acetoacetate(out) + 2 Na(+)(out) = acetoacetate(in) + 2 Na(+)(in). It catalyses the reaction 4-methyl-2-oxopentanoate(out) + 2 Na(+)(out) = 4-methyl-2-oxopentanoate(in) + 2 Na(+)(in). The catalysed reaction is 5-oxo-L-proline(out) + 2 Na(+)(out) = 5-oxo-L-proline(in) + 2 Na(+)(in). The enzyme catalyses iodide(out) = iodide(in). It carries out the reaction chloride(in) = chloride(out). It catalyses the reaction nitrate(in) = nitrate(out). The catalysed reaction is bromide(in) = bromide(out). Its activity is regulated as follows. Transport of D-lactate and pyruvate stimulated by alpha-cyano-4-hydroxycinnamic acid, but inhibited by the short-chain fatty acids acetate, propionate and butyrate. Acts as an electrogenic sodium (Na(+)) and chloride (Cl-)-dependent sodium-coupled solute transporter, including transport of monocarboxylates (short-chain fatty acids including L-lactate, D-lactate, pyruvate, acetate, propionate, valerate and butyrate), mocarboxylate drugs (nicotinate, benzoate, salicylate and 5-aminosalicylate) and ketone bodies (beta-D-hydroxybutyrate, acetoacetate and alpha-ketoisocaproate), with a Na(+):substrate stoichiometry of between 4:1 and 2:1. Catalyzes passive carrier mediated diffusion of iodide. Mediates iodide transport from the thyrocyte into the colloid lumen through the apical membrane. May be responsible for the absorption of D-lactate and monocarboxylate drugs from the intestinal tract. May play a critical role in the entry of L-lactate and ketone bodies into neurons by a process driven by an electrochemical Na(+) gradient and hence contribute to the maintenance of the energy status and function of neurons. Mediates sodium-coupled electrogenic transport of pyroglutamate (5-oxo-L-proline). Can mediate the transport of chloride, bromide, iodide and nitrate ions when external concentration of sodium ions is reduced. This Mus musculus (Mouse) protein is Sodium-coupled monocarboxylate transporter 1.